The following is a 190-amino-acid chain: MKALQEKILREGSVSGNDILKVDSFLNHQIDVAFLNEIGREFKERFKGEKVDKIFTIEASGIAIASIVSQYFDNAPVVFAKKSESKNLDKDVYETNVYSFTKAREYSVKVSKKYINKGENILIVDDFLANGRAALGLKDLIEQAEANLVGVGIVIEKGFQAGGALLKANDVRLESLAVVESIDNGTVKFR.

Residues leucine 20 and asparagine 27 each contribute to the xanthine site. 129 to 133 (ANGRA) is a 5-phospho-alpha-D-ribose 1-diphosphate binding site. Lysine 157 lines the xanthine pocket.

Belongs to the purine/pyrimidine phosphoribosyltransferase family. Xpt subfamily. Homodimer.

It is found in the cytoplasm. The catalysed reaction is XMP + diphosphate = xanthine + 5-phospho-alpha-D-ribose 1-diphosphate. Its pathway is purine metabolism; XMP biosynthesis via salvage pathway; XMP from xanthine: step 1/1. Functionally, converts the preformed base xanthine, a product of nucleic acid breakdown, to xanthosine 5'-monophosphate (XMP), so it can be reused for RNA or DNA synthesis. This chain is Xanthine phosphoribosyltransferase, found in Clostridioides difficile (strain 630) (Peptoclostridium difficile).